Reading from the N-terminus, the 244-residue chain is 14-3-3 protein homolog 1 (244 aa).

The protein belongs to the 14-3-3 family.

This Echinococcus granulosus (Hydatid tapeworm) protein is 14-3-3 protein homolog 1.